The chain runs to 219 residues: Swarming motility regulation protein RssB (219 aa).

The 115-residue stretch at 2–116 folds into the Response regulatory domain; the sequence is NILLVEDDLQ…ELISRVKAVN (115 aa). Position 51 is a 4-aspartylphosphate (aspartate 51). Positions 124-218 form a DNA-binding region, ompR/PhoB-type; the sequence is SQTWSLGALY…VRGIGYLLKK (95 aa).

It localises to the cytoplasm. Functionally, member of the two-component regulatory system RssA/RssB involved in regulation of swarming motility which has been shown to be inhibited by saturated fatty acids. RssA/RssB regulates cellular fatty acid composition, hemolysin production and cell surface topography. RssA/RssB negatively regulates the activity of SlhBA. It can also act as a negative regulator for the control of the swarming initiation. RssB binds its own promoter. The protein is Swarming motility regulation protein RssB (rssB) of Serratia marcescens.